Reading from the N-terminus, the 65-residue chain is Beta-defensin 106A (65 aa).

Positions M1 to A20 are cleaved as a signal peptide. 3 cysteine pairs are disulfide-bonded: C26-C53, C33-C47, and C37-C54.

Belongs to the beta-defensin family. Monomer. Interacts with CCR2 (via extracellular N-terminal region); this interaction may preferentially require specific tyrosine sulfation on CCR2.

The protein localises to the secreted. Its subcellular location is the membrane. Has antibacterial activity. Acts as a ligand for C-C chemokine receptor CCR2. The chain is Beta-defensin 106A (DEFB106A) from Hylobates lar (Lar gibbon).